The primary structure comprises 327 residues: Inactive peptidyl-prolyl cis-trans isomerase FKBP6 (327 aa).

Positions 1-20 (MSVFSRLRNGIPPSRDDCQS) are disordered. The PPIase FKBP-type domain occupies 54–143 (DASVLVKYSG…LFEIELIDFL (90 aa)). 3 TPR repeats span residues 171-204 (AATE…LHRR), 219-252 (LLVL…DKRN), and 253-286 (AKAL…QPCN).

This sequence belongs to the FKBP6 family. As to quaternary structure, interacts with HSP72/HSPA2 and CLTC. Interacts with GAPDH; leading to inhibit GAPDH catalytic activity. Interacts (via TPR repeats) with HSP90.

It localises to the cytoplasm. Its subcellular location is the cytosol. The protein resides in the nucleus. It is found in the chromosome. Co-chaperone required during spermatogenesis to repress transposable elements and prevent their mobilization, which is essential for the germline integrity. Acts via the piRNA metabolic process, which mediates the repression of transposable elements during meiosis by forming complexes composed of piRNAs and Piwi proteins and govern the methylation and subsequent repression of transposons. Acts as a co-chaperone via its interaction with HSP90 and is required for the piRNA amplification process, the secondary piRNA biogenesis. May be required together with HSP90 in removal of 16 nucleotide ping-pong by-products from Piwi complexes, possibly facilitating turnover of Piwi complexes. The sequence is that of Inactive peptidyl-prolyl cis-trans isomerase FKBP6 (Fkbp6) from Rattus norvegicus (Rat).